A 148-amino-acid polypeptide reads, in one-letter code: Fibroblast growth factor 1 (148 aa).

Residues 1 to 11 (EITTFAALTER) constitute a propeptide that is removed on maturation. Position 29 (Asn-29) interacts with heparin. Positions 123–139 (KKNGKTKLGSRTHFGQK) are heparin-binding.

The protein belongs to the heparin-binding growth factors family.

The protein localises to the secreted. It localises to the cytoplasm. The protein resides in the cell cortex. Its subcellular location is the cytosol. It is found in the nucleus. In terms of biological role, plays an important role in the regulation of cell survival, cell division, angiogenesis, cell differentiation and cell migration. Functions as a potent mitogen in vitro. Acts as a ligand for FGFR1 and integrins. Binds to FGFR1 in the presence of heparin leading to FGFR1 dimerization and activation via sequential autophosphorylation on tyrosine residues which act as docking sites for interacting proteins, leading to the activation of several signaling cascades. Binds to integrins. Its binding to integrins and subsequent ternary complex formation with integrins and FGFR1 are essential for FGF1 signaling. The protein is Fibroblast growth factor 1 (fgf1) of Cynops pyrrhogaster (Japanese fire-bellied newt).